The sequence spans 590 residues: Glutamine--tRNA ligase (590 aa).

Positions 55-65 (PEPNGYLHIGH) match the 'HIGH' region motif. ATP-binding positions include 56–58 (EPN) and 62–68 (HIGHAKS). Residues aspartate 93 and tyrosine 238 each contribute to the L-glutamine site. Residues threonine 257 and 292-293 (RL) each bind ATP. The 'KMSKS' region motif lies at 299-303 (ITSKR).

Belongs to the class-I aminoacyl-tRNA synthetase family. As to quaternary structure, monomer.

The protein localises to the cytoplasm. The catalysed reaction is tRNA(Gln) + L-glutamine + ATP = L-glutaminyl-tRNA(Gln) + AMP + diphosphate. The sequence is that of Glutamine--tRNA ligase from Polynucleobacter asymbioticus (strain DSM 18221 / CIP 109841 / QLW-P1DMWA-1) (Polynucleobacter necessarius subsp. asymbioticus).